A 96-amino-acid polypeptide reads, in one-letter code: Glutamyl-tRNA(Gln) amidotransferase subunit C (96 aa).

It belongs to the GatC family. As to quaternary structure, heterotrimer of A, B and C subunits.

It carries out the reaction L-glutamyl-tRNA(Gln) + L-glutamine + ATP + H2O = L-glutaminyl-tRNA(Gln) + L-glutamate + ADP + phosphate + H(+). The catalysed reaction is L-aspartyl-tRNA(Asn) + L-glutamine + ATP + H2O = L-asparaginyl-tRNA(Asn) + L-glutamate + ADP + phosphate + 2 H(+). In terms of biological role, allows the formation of correctly charged Asn-tRNA(Asn) or Gln-tRNA(Gln) through the transamidation of misacylated Asp-tRNA(Asn) or Glu-tRNA(Gln) in organisms which lack either or both of asparaginyl-tRNA or glutaminyl-tRNA synthetases. The reaction takes place in the presence of glutamine and ATP through an activated phospho-Asp-tRNA(Asn) or phospho-Glu-tRNA(Gln). The polypeptide is Glutamyl-tRNA(Gln) amidotransferase subunit C (Deinococcus radiodurans (strain ATCC 13939 / DSM 20539 / JCM 16871 / CCUG 27074 / LMG 4051 / NBRC 15346 / NCIMB 9279 / VKM B-1422 / R1)).